Reading from the N-terminus, the 243-residue chain is Tegument protein UL14 homolog (243 aa).

Belongs to the alphaherpesvirinae HHV-1 UL14 protein family. Post-translationally, phosphorylated.

Its subcellular location is the virion tegument. The protein localises to the host cytoplasm. The protein resides in the host nucleus. Contributes to the nuclear transport of the viral transcriptional activator VP16 homolog during the early phase of infection. Therefore, participates indirectly in the regulation of the immediate-early gene expression. Additionally, seems to be important for efficient nuclear targeting of capsids. In Gallid herpesvirus 2 (strain Chicken/Md5/ATCC VR-987) (GaHV-2), this protein is Tegument protein UL14 homolog (MDV026).